The following is a 482-amino-acid chain: FAD-dependent monooxygenase esdpE (482 aa).

Positions 1–21 (MGAERLKVIIVGGSIAGLTLA) are cleaved as a signal peptide. Glu-35 and Arg-108 together coordinate FAD. Asn-243 carries an N-linked (GlcNAc...) asparagine glycan. Residues Asp-308 and Ala-321 each coordinate FAD. The helical transmembrane segment at 440–460 (LFSGSLLLIMSVALLFGVICW) threads the bilayer.

Belongs to the paxM FAD-dependent monooxygenase family. It depends on FAD as a cofactor.

The protein resides in the membrane. It functions in the pathway secondary metabolite biosynthesis; terpenoid biosynthesis. Its function is as follows. FAD-dependent monooxygenase; part of the cluster that mediates the biosynthesis of shearones, diterpenoid pyrones (DPs) which are structurally diverse meroterpenoids consisting of a diterpene linked by a pyrone, and which may exhibit a range of bioactivities. Within the pathway, esdpE takes part to the biosynthesis of the molecular scaffold by catalyzing the formation of an (S)-epoxide ring at the terminal olefin of the geranylgeranyl group. The molecular scaffold is commonly biosynthesized by a series of enzymes including the non-reducing polyketide synthase (NR-PKS) esdpA that generates an alpha-pyrone; the prenyltransferase esdpC that attaches a geranylgeranyl pyrophosphate (GGPP) produced by the GGPP synthase (GGPPS) esdpD onto the pyrone unit; the FAD-dependent monooxygenase esdpE that converts an olefin on the diterpene unit into an epoxide; and the terpene cyclase esdpB that catalyzes the cyclization reactions to give the molecular backbone shearone A. In the modification steps, esdpF oxidizes the hydroxy group to a ketone at C-3 and esdpG then attaches hydroxy groups at both C-11 and C-12. After that, esdpI hydroxylates at C-20 and esdpH hydroxylates at C-6'. The ether bridge is generated by nucleophilic attack of the hydroxy group at C-20 to the carbonyl carbon at C-3. EsdpH can also functions prior to esdpI. The different combinations of these modification enzymes lead to the production of diverse shearone derivatives, shearone I being the end product of the pathway. The alpha-ketoglutarate-dependent dioxygenase esdpJ seems not to be involved in this pathway. In Penicillium shearii (Eupenicillium shearii), this protein is FAD-dependent monooxygenase esdpE.